The primary structure comprises 337 residues: Ketol-acid reductoisomerase (NADP(+)) (337 aa).

One can recognise a KARI N-terminal Rossmann domain in the interval 3–183; that stretch reads IELLYDADAD…GGARAGVIPT (181 aa). NADP(+)-binding positions include 26–29, arginine 49, serine 52, serine 54, and 84–87; these read YGSQ and DTSQ. Histidine 109 is a catalytic residue. Glycine 135 serves as a coordination point for NADP(+). Residues 184 to 329 form the KARI C-terminal knotted domain; it reads TFREETETDL…SKLRDLMSWV (146 aa). Mg(2+) contacts are provided by aspartate 192, glutamate 196, glutamate 228, and glutamate 232. Serine 253 lines the substrate pocket.

The protein belongs to the ketol-acid reductoisomerase family. Mg(2+) is required as a cofactor.

It catalyses the reaction (2R)-2,3-dihydroxy-3-methylbutanoate + NADP(+) = (2S)-2-acetolactate + NADPH + H(+). The enzyme catalyses (2R,3R)-2,3-dihydroxy-3-methylpentanoate + NADP(+) = (S)-2-ethyl-2-hydroxy-3-oxobutanoate + NADPH + H(+). Its pathway is amino-acid biosynthesis; L-isoleucine biosynthesis; L-isoleucine from 2-oxobutanoate: step 2/4. It functions in the pathway amino-acid biosynthesis; L-valine biosynthesis; L-valine from pyruvate: step 2/4. In terms of biological role, involved in the biosynthesis of branched-chain amino acids (BCAA). Catalyzes an alkyl-migration followed by a ketol-acid reduction of (S)-2-acetolactate (S2AL) to yield (R)-2,3-dihydroxy-isovalerate. In the isomerase reaction, S2AL is rearranged via a Mg-dependent methyl migration to produce 3-hydroxy-3-methyl-2-ketobutyrate (HMKB). In the reductase reaction, this 2-ketoacid undergoes a metal-dependent reduction by NADPH to yield (R)-2,3-dihydroxy-isovalerate. The chain is Ketol-acid reductoisomerase (NADP(+)) from Corynebacterium diphtheriae (strain ATCC 700971 / NCTC 13129 / Biotype gravis).